The chain runs to 214 residues: Orotate phosphoribosyltransferase (214 aa).

Residues Arg-125, Lys-126, Lys-129, His-131, and 151-159 (EDTSTTGNS) contribute to the 5-phospho-alpha-D-ribose 1-diphosphate site. Orotate is bound by residues Thr-155 and Arg-183.

Belongs to the purine/pyrimidine phosphoribosyltransferase family. PyrE subfamily. As to quaternary structure, homodimer. The cofactor is Mg(2+).

It carries out the reaction orotidine 5'-phosphate + diphosphate = orotate + 5-phospho-alpha-D-ribose 1-diphosphate. The protein operates within pyrimidine metabolism; UMP biosynthesis via de novo pathway; UMP from orotate: step 1/2. Catalyzes the transfer of a ribosyl phosphate group from 5-phosphoribose 1-diphosphate to orotate, leading to the formation of orotidine monophosphate (OMP). The protein is Orotate phosphoribosyltransferase of Tropheryma whipplei (strain Twist) (Whipple's bacillus).